The chain runs to 232 residues: Phosphatidylserine decarboxylase proenzyme (232 aa).

Serine 190 acts as the Schiff-base intermediate with substrate; via pyruvic acid in catalysis. A Pyruvic acid (Ser); by autocatalysis modification is found at serine 190.

This sequence belongs to the phosphatidylserine decarboxylase family. PSD-A subfamily. As to quaternary structure, heterodimer of a large membrane-associated beta subunit and a small pyruvoyl-containing alpha subunit. Pyruvate is required as a cofactor. Is synthesized initially as an inactive proenzyme. Formation of the active enzyme involves a self-maturation process in which the active site pyruvoyl group is generated from an internal serine residue via an autocatalytic post-translational modification. Two non-identical subunits are generated from the proenzyme in this reaction, and the pyruvate is formed at the N-terminus of the alpha chain, which is derived from the carboxyl end of the proenzyme. The post-translation cleavage follows an unusual pathway, termed non-hydrolytic serinolysis, in which the side chain hydroxyl group of the serine supplies its oxygen atom to form the C-terminus of the beta chain, while the remainder of the serine residue undergoes an oxidative deamination to produce ammonia and the pyruvoyl prosthetic group on the alpha chain.

It is found in the cell membrane. The enzyme catalyses a 1,2-diacyl-sn-glycero-3-phospho-L-serine + H(+) = a 1,2-diacyl-sn-glycero-3-phosphoethanolamine + CO2. It functions in the pathway phospholipid metabolism; phosphatidylethanolamine biosynthesis; phosphatidylethanolamine from CDP-diacylglycerol: step 2/2. Functionally, catalyzes the formation of phosphatidylethanolamine (PtdEtn) from phosphatidylserine (PtdSer). The polypeptide is Phosphatidylserine decarboxylase proenzyme (Afipia carboxidovorans (strain ATCC 49405 / DSM 1227 / KCTC 32145 / OM5) (Oligotropha carboxidovorans)).